Consider the following 192-residue polypeptide: Peptidyl-tRNA hydrolase (192 aa).

Tyr17 contacts tRNA. His22 functions as the Proton acceptor in the catalytic mechanism. Positions 68, 70, and 116 each coordinate tRNA.

Belongs to the PTH family. Monomer.

It localises to the cytoplasm. It catalyses the reaction an N-acyl-L-alpha-aminoacyl-tRNA + H2O = an N-acyl-L-amino acid + a tRNA + H(+). Hydrolyzes ribosome-free peptidyl-tRNAs (with 1 or more amino acids incorporated), which drop off the ribosome during protein synthesis, or as a result of ribosome stalling. Its function is as follows. Catalyzes the release of premature peptidyl moieties from peptidyl-tRNA molecules trapped in stalled 50S ribosomal subunits, and thus maintains levels of free tRNAs and 50S ribosomes. The polypeptide is Peptidyl-tRNA hydrolase (Xylella fastidiosa (strain Temecula1 / ATCC 700964)).